We begin with the raw amino-acid sequence, 655 residues long: Probable glucan endo-1,3-beta-glucosidase btgC (655 aa).

Disordered regions lie at residues M1–G61 and S89–D114. At M1–R282 the chain is on the cytoplasmic side. Over residues D19 to D33 the composition is skewed to polar residues. Over residues S89–D98 the composition is skewed to basic and acidic residues. The chain crosses the membrane as a helical; Signal-anchor for type II membrane protein span at residues G283–V303. At G304–T655 the chain is on the extracellular side. Positions G305–I338 are disordered. Over residues G323 to I338 the composition is skewed to basic and acidic residues. The N-linked (GlcNAc...) asparagine glycan is linked to N426. E458 functions as the Proton donor in the catalytic mechanism. E557 acts as the Nucleophile in catalysis. N576 and N602 each carry an N-linked (GlcNAc...) asparagine glycan.

Belongs to the glycosyl hydrolase 17 family.

It is found in the cell membrane. It carries out the reaction Hydrolysis of (1-&gt;3)-beta-D-glucosidic linkages in (1-&gt;3)-beta-D-glucans.. Functionally, glucanases play a role in cell expansion during growth, in cell-cell fusion during mating, and in spore release during sporulation. This enzyme may be involved in beta-glucan degradation. Active on laminarin and lichenan. The polypeptide is Probable glucan endo-1,3-beta-glucosidase btgC (btgC) (Aspergillus terreus (strain NIH 2624 / FGSC A1156)).